Reading from the N-terminus, the 231-residue chain is 7-cyano-7-deazaguanine synthase (231 aa).

Residue 8 to 18 (FSGGQDSTTCL) participates in ATP binding. The Zn(2+) site is built by Cys-188, Cys-197, Cys-200, and Cys-203.

Belongs to the QueC family. Zn(2+) serves as cofactor.

It catalyses the reaction 7-carboxy-7-deazaguanine + NH4(+) + ATP = 7-cyano-7-deazaguanine + ADP + phosphate + H2O + H(+). Its pathway is purine metabolism; 7-cyano-7-deazaguanine biosynthesis. Its function is as follows. Catalyzes the ATP-dependent conversion of 7-carboxy-7-deazaguanine (CDG) to 7-cyano-7-deazaguanine (preQ(0)). The protein is 7-cyano-7-deazaguanine synthase of Salmonella paratyphi B (strain ATCC BAA-1250 / SPB7).